We begin with the raw amino-acid sequence, 330 residues long: 3'-5' exonuclease (330 aa).

Residues 1-92 (MDQYLIKMST…DGTPSPEKEI (92 aa)) are disordered. Basic and acidic residues-rich tracts occupy residues 27-39 (NTTR…KEKI) and 48-66 (KDTP…ENPP). Phosphoserine occurs at positions 79 and 87. Residues 117–289 (SADEVMQWVE…IGQVIYRDIE (173 aa)) form the 3'-5' exonuclease domain. Asp-139, Glu-141, and Asp-277 together coordinate Mg(2+).

This sequence belongs to the WRNexo family.

It is found in the nucleus. Has exonuclease activity on both single-stranded and duplex templates bearing overhangs, but not blunt ended duplex DNA, and cleaves in a 3'-5' direction. Essential for the formation of DNA replication focal centers. Has an important role in maintaining genome stability. This chain is 3'-5' exonuclease, found in Drosophila virilis (Fruit fly).